The chain runs to 245 residues: Small ribosomal subunit protein uS3 (245 aa).

One can recognise a KH type-2 domain in the interval 39 to 108 (IRNYIKKNYY…SVFVNVQEVK (70 aa)).

This sequence belongs to the universal ribosomal protein uS3 family. In terms of assembly, part of the 30S ribosomal subunit. Forms a tight complex with proteins S10 and S14.

In terms of biological role, binds the lower part of the 30S subunit head. Binds mRNA in the 70S ribosome, positioning it for translation. In Dictyoglomus turgidum (strain DSM 6724 / Z-1310), this protein is Small ribosomal subunit protein uS3.